We begin with the raw amino-acid sequence, 465 residues long: Ribulose bisphosphate carboxylase large chain (465 aa).

Residue Lys-4 is modified to N6,N6,N6-trimethyllysine. The substrate site is built by Asn-113 and Thr-163. Lys-165 (proton acceptor) is an active-site residue. Residue Lys-167 coordinates substrate. Positions 191, 193, and 194 each coordinate Mg(2+). Lys-191 carries the N6-carboxylysine modification. His-284 (proton acceptor) is an active-site residue. The substrate site is built by Arg-285, His-317, and Ser-369.

This sequence belongs to the RuBisCO large chain family. Type I subfamily. In terms of assembly, heterohexadecamer of 8 large chains and 8 small chains; disulfide-linked. The disulfide link is formed within the large subunit homodimers. Mg(2+) is required as a cofactor. In terms of processing, the disulfide bond which can form in the large chain dimeric partners within the hexadecamer appears to be associated with oxidative stress and protein turnover.

It localises to the plastid. The protein localises to the chloroplast. The catalysed reaction is 2 (2R)-3-phosphoglycerate + 2 H(+) = D-ribulose 1,5-bisphosphate + CO2 + H2O. It carries out the reaction D-ribulose 1,5-bisphosphate + O2 = 2-phosphoglycolate + (2R)-3-phosphoglycerate + 2 H(+). Functionally, ruBisCO catalyzes two reactions: the carboxylation of D-ribulose 1,5-bisphosphate, the primary event in carbon dioxide fixation, as well as the oxidative fragmentation of the pentose substrate in the photorespiration process. Both reactions occur simultaneously and in competition at the same active site. The protein is Ribulose bisphosphate carboxylase large chain of Cornus oblonga.